Consider the following 443-residue polypeptide: Ribulose bisphosphate carboxylase large chain (443 aa).

Residues N89 and T139 each contribute to the substrate site. K141 serves as the catalytic Proton acceptor. K143 is a binding site for substrate. 3 residues coordinate Mg(2+): K167, D169, and E170. K167 is subject to N6-carboxylysine. H260 functions as the Proton acceptor in the catalytic mechanism. Substrate is bound by residues R261, H293, and S345.

Belongs to the RuBisCO large chain family. Type I subfamily. Heterohexadecamer of 8 large chains and 8 small chains; disulfide-linked. The disulfide link is formed within the large subunit homodimers. It depends on Mg(2+) as a cofactor. The disulfide bond which can form in the large chain dimeric partners within the hexadecamer appears to be associated with oxidative stress and protein turnover.

Its subcellular location is the plastid. It is found in the chloroplast. The catalysed reaction is 2 (2R)-3-phosphoglycerate + 2 H(+) = D-ribulose 1,5-bisphosphate + CO2 + H2O. It catalyses the reaction D-ribulose 1,5-bisphosphate + O2 = 2-phosphoglycolate + (2R)-3-phosphoglycerate + 2 H(+). Functionally, ruBisCO catalyzes two reactions: the carboxylation of D-ribulose 1,5-bisphosphate, the primary event in carbon dioxide fixation, as well as the oxidative fragmentation of the pentose substrate in the photorespiration process. Both reactions occur simultaneously and in competition at the same active site. This chain is Ribulose bisphosphate carboxylase large chain, found in Buddleja davidii (Butterfly bush).